Reading from the N-terminus, the 667-residue chain is MADLSSRVNELHDLLNQYSYEYYVEDNPSVPDSEYDKLLHELIKIEEEHPEFKTVDSPTVRVGGEAQASFNKVNHDTPMLSLGNAFNEDDLRKFDQRIREQIGNVEYMCELKIDGLAVSLKYVDGYFVQGLTRGDGTTGEDITENLKTIHAIPLKMKEPLNVEVRGEAYMPRRSFLRLNEEKEKNDEQLFANPRNAAAGSLRQLDSKLTAKRKLSVFIYSVNDFTDFNARSQSEALDELDKLGFTTNKNRARVSDIDGVLEYIEKWTSQRESLPYDIDGIVIKVNDLDQQDEMGFTQKSPRWAIAYKFPAEEVVTKLLDIELSIGRTGVVTPTAILEPVKVAGTTVSRASLHNEDLIHDRDIRIGDSVVVKKAGDIIPEVVRSIPERRPEDAVTYHMPTHCPSCGHELVRIEGEVALRCINPKCQAQLVEGLIHFVSRQAMNIDGLGTKIIQQLYQSELIKDVADIFYLTEEDLLPLDRMGQKKVDNLLAAIQQAKDNSLENLLFGLGIRHLGVKASQVLAEKYETIDRLLTVTEAELVEIHDIGDKVAQSVVTYLENEDIRALIQKLKDKHVNMIYKGIKTSDIEGHPEFSGKTIVLTGKLHQMTRNEASKWLASQGAKVTSSVTKNTDVVIAGEDAGSKLTKAQSLGIEIWTEQQFVDKQNELNS.

NAD(+) is bound by residues 32-36 (DSEYD), 81-82 (SL), and glutamate 110. The active-site N6-AMP-lysine intermediate is lysine 112. Residues arginine 133, glutamate 167, lysine 283, and lysine 307 each coordinate NAD(+). Residues cysteine 401, cysteine 404, cysteine 419, and cysteine 424 each coordinate Zn(2+). A BRCT domain is found at 586–667 (EGHPEFSGKT…FVDKQNELNS (82 aa)).

Belongs to the NAD-dependent DNA ligase family. LigA subfamily. Mg(2+) serves as cofactor. The cofactor is Mn(2+).

It carries out the reaction NAD(+) + (deoxyribonucleotide)n-3'-hydroxyl + 5'-phospho-(deoxyribonucleotide)m = (deoxyribonucleotide)n+m + AMP + beta-nicotinamide D-nucleotide.. Its function is as follows. DNA ligase that catalyzes the formation of phosphodiester linkages between 5'-phosphoryl and 3'-hydroxyl groups in double-stranded DNA using NAD as a coenzyme and as the energy source for the reaction. It is essential for DNA replication and repair of damaged DNA. This is DNA ligase from Staphylococcus aureus (strain MRSA252).